The following is a 1287-amino-acid chain: MAVISKVTYSLYDQKEINATDIIISHVKNDDDIGTVKDGRLGAMDGALCKTCGKTELECFGHWGKVSIYKTHIVKPEFISEIIRLLNHICIHCGLLRSREPYSDDINLKELSGHALRRLKDKILSKKKSCWNSECMQPYQKITFSKKKVCFVNKLDDINVPNSLIYQKLISIHEKFWPLLEIHQYPANLFYTDYFPIPPLIIRPAISFWIDSIPKETNELTYLLGMIVKNCNLNADEQVIQKAVIEYDDIKIISNNTSSINLSYITSGKNNMIRSYIVARRKDQTARSVIGPSTSITVNEVGMPAYIRNTLTEKIFVNAFTVDKVKQLLASNQVKFYFNKRLNQLTRIRQGKFIKNKIHLLPGDWVEVAVQEYTSIIFGRQPSLHRYNVIASSIRATEGDTIKISPGIANSQNADFDGDEEWMILEQNPKAVIEQSILMYPTTLLKHDIHGAPVYGSIQDEIVAAYSLFRIQDLCLDEVLNILGKYGREFDPKGKCKFSGKDIYTYLIGEKINYPGLLKDGEIIANDVDSNFVVAMRHLSLAGLLSDHKSNVEGINFIIKSSYVFKRYLSIYGFGVTFKDLRPNSTFTNKLEAINVEKIELIKEAYAKYLNDVRDGKIVPLSKALEADYVESMLSNLTNLNIREIEEHMRQTLIDDPDNNLLKMAKAGYKVNPTELMYILGTYGQQRIDGEPAETRVLGRVLPYYLPDSKDPEGRGYILNSLTKGLTGSQYYFSMLVARSQSTDIVCETSRTGTLARKIIKKMEDMVVDGYGQVVIGNTLIKYAANYTKILGSVCKPVDLIYPDESMTWYLEISALWNKIKQGFVYSQKQKLAKKTLAPFNFLVFVKPTTEDNAIKVKDLYDMIHNVIDDVREKYFFTVSNIDFMEYIFLTHLNPSRIRITKETAITIFEKFYEKLNYTLGGGTPIGIISAQVLSEKFTQQALSSFHTTEKSGAVKQKLGFNEFNNLTNLSKNKTEIITLVSDDISKLQSVKINFEFVCLGELNPDHSLFEKKQDRYVVDIIVNKLYIKRAEITELVVEYMIERFISFSVIVKEWGMETFIEDEDNIRFTVYLNFVEPEELNLSKFMMVLPGAANKGKISKFKIPISDYTGYDCFNQTKKLNKMTVELMNLKELGSFDLENVNVYPGVWNTYDIFGIEAAREYLCEAMLNTYGEGFDYLYQPCDLLASLLCASYEPESVNKFKFGAASTLKRATFGDNKALLNAALHKKSEPINDNSSCHFFSKVPNIGTGYYKYFIDLGLLMRMERKLSDKISSQKIKEMEETEDF.

Belongs to the poxviridae DNA-directed RNA polymerase 147 kDa subunit family. As to quaternary structure, the DNA-dependent RNA polymerase used for intermediate and late genes expression consists of eight subunits Rpo30/OPG66, Rpo7/OPG90, Rpo22/OPG103, Rpo147/OPG105, Rpo18/OPG119, Rpo19/OPG131, Rpo132/OPG151 and Rpo35/OPG156. The same holoenzyme, with the addition of the transcription-specificity factor OPG109, is used for early gene expression.

It is found in the virion. The enzyme catalyses RNA(n) + a ribonucleoside 5'-triphosphate = RNA(n+1) + diphosphate. Functionally, part of the DNA-dependent RNA polymerase which catalyzes the transcription of viral DNA into RNA using the four ribonucleoside triphosphates as substrates. Responsible for the transcription of early, intermediate and late genes. DNA-dependent RNA polymerase associates with the early transcription factor (ETF), itself composed of OPG118 and OPG133, thereby allowing the early genes transcription. Late transcription, and probably also intermediate transcription, require newly synthesized RNA polymerase. The polypeptide is DNA-directed RNA polymerase 147 kDa polypeptide (OPG105) (Bos taurus (Bovine)).